Consider the following 158-residue polypeptide: Ribonuclease H (158 aa).

Positions methionine 1–aspartate 147 constitute an RNase H type-1 domain. 4 residues coordinate Mg(2+): aspartate 8, glutamate 52, aspartate 74, and aspartate 139.

The protein belongs to the RNase H family. Monomer. The cofactor is Mg(2+).

It is found in the cytoplasm. It carries out the reaction Endonucleolytic cleavage to 5'-phosphomonoester.. In terms of biological role, endonuclease that specifically degrades the RNA of RNA-DNA hybrids. This is Ribonuclease H from Lachnoclostridium phytofermentans (strain ATCC 700394 / DSM 18823 / ISDg) (Clostridium phytofermentans).